The sequence spans 199 residues: Gene 66 protein (199 aa).

This chain is Gene 66 protein (66), found in Mycobacterium (Mycobacteriophage D29).